Reading from the N-terminus, the 274-residue chain is F-actin-capping protein subunit alpha (274 aa).

This sequence belongs to the F-actin-capping protein alpha subunit family. In terms of assembly, heterodimer of an alpha and a beta subunit.

Its subcellular location is the cytoplasm. In terms of biological role, F-actin-capping proteins bind in a Ca(2+)-independent manner to the fast growing ends of actin filaments (barbed end) thereby blocking the exchange of subunits at these ends. Unlike other capping proteins (such as gelsolin and severin), these proteins do not sever actin filaments. The polypeptide is F-actin-capping protein subunit alpha (Chaetomium thermophilum (strain DSM 1495 / CBS 144.50 / IMI 039719) (Thermochaetoides thermophila)).